The primary structure comprises 103 residues: Cell division protein FtsB (103 aa).

Over 1 to 3 (MGK) the chain is Cytoplasmic. A helical membrane pass occupies residues 4–21 (LTLLLLALLVWLQYSLWF). Residues 22 to 103 (GKNGIHDYSR…RAATAGQTHR (82 aa)) are Periplasmic-facing. Residues 33–62 (NDDVVAQQATNAKLKARNDQLFAEIDDLNG) adopt a coiled-coil conformation.

This sequence belongs to the FtsB family. Part of a complex composed of FtsB, FtsL and FtsQ.

It is found in the cell inner membrane. Its function is as follows. Essential cell division protein. May link together the upstream cell division proteins, which are predominantly cytoplasmic, with the downstream cell division proteins, which are predominantly periplasmic. The polypeptide is Cell division protein FtsB (Salmonella agona (strain SL483)).